The sequence spans 235 residues: Pyridoxine 5'-phosphate synthase (235 aa).

Asparagine 6 serves as a coordination point for 3-amino-2-oxopropyl phosphate. 8–9 (DH) serves as a coordination point for 1-deoxy-D-xylulose 5-phosphate. Arginine 17 lines the 3-amino-2-oxopropyl phosphate pocket. Histidine 42 serves as the catalytic Proton acceptor. Residues arginine 44 and histidine 49 each coordinate 1-deoxy-D-xylulose 5-phosphate. Glutamate 69 acts as the Proton acceptor in catalysis. 1-deoxy-D-xylulose 5-phosphate is bound at residue threonine 99. The Proton donor role is filled by histidine 188. 3-amino-2-oxopropyl phosphate contacts are provided by residues glycine 189 and 210–211 (GH).

Belongs to the PNP synthase family. In terms of assembly, homooctamer; tetramer of dimers.

It localises to the cytoplasm. The enzyme catalyses 3-amino-2-oxopropyl phosphate + 1-deoxy-D-xylulose 5-phosphate = pyridoxine 5'-phosphate + phosphate + 2 H2O + H(+). It participates in cofactor biosynthesis; pyridoxine 5'-phosphate biosynthesis; pyridoxine 5'-phosphate from D-erythrose 4-phosphate: step 5/5. Its function is as follows. Catalyzes the complicated ring closure reaction between the two acyclic compounds 1-deoxy-D-xylulose-5-phosphate (DXP) and 3-amino-2-oxopropyl phosphate (1-amino-acetone-3-phosphate or AAP) to form pyridoxine 5'-phosphate (PNP) and inorganic phosphate. This Wolbachia pipientis subsp. Culex pipiens (strain wPip) protein is Pyridoxine 5'-phosphate synthase.